Reading from the N-terminus, the 813-residue chain is Putative ATPase, plasma membrane-like (813 aa).

Residues M1–F66 lie on the Cytoplasmic side of the membrane. A helical membrane pass occupies residues F67–M86. Residues L87–R94 lie on the Extracellular side of the membrane. The chain crosses the membrane as a helical span at residues Q95–E115. Residues D116–I245 lie on the Cytoplasmic side of the membrane. Residues E246 to W266 traverse the membrane as a helical segment. Residues I267–V275 are Extracellular-facing. The chain crosses the membrane as a helical span at residues I276–T293. Residues V294–K555 are Cytoplasmic-facing. The active-site 4-aspartylphosphate intermediate is D331. The Mg(2+) site is built by D500 and D504. The chain crosses the membrane as a helical span at residues H556–L577. The Extracellular segment spans residues I578–D582. Residues F583–D605 traverse the membrane as a helical segment. Residues N606–I622 are Cytoplasmic-facing. The chain crosses the membrane as a helical span at residues F623 to A643. Over A644–A664 the chain is Extracellular. Residues E665–I685 form a helical membrane-spanning segment. Residues Q686–G697 are Cytoplasmic-facing. The helical transmembrane segment at E698–A718 threads the bilayer. At S719–E726 the chain is on the extracellular side. The chain crosses the membrane as a helical span at residues G727 to L747. The Cytoplasmic portion of the chain corresponds to D748–V813. Position 776 is a phosphoserine (S776).

This sequence belongs to the cation transport ATPase (P-type) (TC 3.A.3) family. Type IIIA subfamily.

The protein localises to the membrane. This is Putative ATPase, plasma membrane-like from Arabidopsis thaliana (Mouse-ear cress).